Here is a 140-residue protein sequence, read N- to C-terminus: Cysteine desulfuration protein SufE (140 aa).

The active-site Cysteine persulfide intermediate is the Cys-51.

It belongs to the SufE family. Homodimer. Interacts with SufS.

It localises to the cytoplasm. Its pathway is cofactor biosynthesis; iron-sulfur cluster biosynthesis. Functionally, participates in cysteine desulfuration mediated by SufS. Cysteine desulfuration mobilizes sulfur from L-cysteine to yield L-alanine and constitutes an essential step in sulfur metabolism for biosynthesis of a variety of sulfur-containing biomolecules. Functions as a sulfur acceptor for SufS, by mediating the direct transfer of the sulfur atom from the S-sulfanylcysteine of SufS, an intermediate product of cysteine desulfuration process. The polypeptide is Cysteine desulfuration protein SufE (Yersinia enterocolitica serotype O:8 / biotype 1B (strain NCTC 13174 / 8081)).